The sequence spans 389 residues: MGQNLSTSNPLGFFPDHQLDPAFRANTRNPDWDFNPNKDTWPDANKVGAGAFGLGFTPPHGGLLGWSPQAQGILQTLPANPPPAATNRQSGRQPTPLSPPLRDAHPQAMQWTSTTFHQALQDPRVRGLYFPAGGSSSGTVNPVPTTASPILSIFSKIGDLAPNMENITSGFLGPLLVLQAGFFLLTRILTIPQSLDSWWTSLNFLGGTTVCLGQNSQSPTSNHSPTSCPPTCPGYRWMCLRRFIIFLFILLLCLIFLLVLLDYQGMLPVCPLIPGSSTTSTGPCRTCMTTAQGTSMYPSCCCTKPSDGNCTCIPIPSSWAFGKFLWEWASARFSWLSLLVPFVQWFAGLSPIVWLSVIWMMWYWGPSLYSILSPFLPLLPIFFCLWAYI.

M1 is subject to N-acetylmethionine. G2 carries the N-myristoyl glycine; by host lipid modification. The pre-S1 stretch occupies residues G2 to A108. Residues G2 to N163 form a pre-S region. Over G2–G170 the chain is Virion surface; in external conformation. The Intravirion; in internal conformation portion of the chain corresponds to G2–R242. Positions T76–D103 are disordered. A compositionally biased stretch (polar residues) spans T86–T95. A pre-S2 region spans residues M109–N163. The chain crosses the membrane as a helical span at residues F171 to I191. Residues P192–R242 lie on the Intravirion; in external conformation side of the membrane. Residues F243–Y263 form a helical membrane-spanning segment. Residues Q264–S337 are Virion surface-facing. N-linked (GlcNAc...) asparagine; by host glycosylation occurs at N309. Residues L338–I358 traverse the membrane as a helical segment. At W359–W364 the chain is on the intravirion side. The helical transmembrane segment at G365–A387 threads the bilayer. The Virion surface portion of the chain corresponds to Y388–I389.

This sequence belongs to the orthohepadnavirus major surface antigen family. In its internal form (Li-HBsAg), interacts with the capsid protein and with the isoform S. Interacts with host chaperone CANX. As to quaternary structure, associates with host chaperone CANX through its pre-S2 N glycan; this association may be essential for isoform M proper secretion. In terms of assembly, interacts with isoform L. Interacts with the antigens of satellite virus HDV (HDVAgs); this interaction is required for encapsidation of HDV genomic RNA. Isoform M is N-terminally acetylated by host at a ratio of 90%, and N-glycosylated by host at the pre-S2 region. In terms of processing, myristoylated.

It localises to the virion membrane. Functionally, the large envelope protein exists in two topological conformations, one which is termed 'external' or Le-HBsAg and the other 'internal' or Li-HBsAg. In its external conformation the protein attaches the virus to cell receptors and thereby initiating infection. This interaction determines the species specificity and liver tropism. This attachment induces virion internalization predominantly through caveolin-mediated endocytosis. The large envelope protein also assures fusion between virion membrane and endosomal membrane. In its internal conformation the protein plays a role in virion morphogenesis and mediates the contact with the nucleocapsid like a matrix protein. Its function is as follows. The middle envelope protein plays an important role in the budding of the virion. It is involved in the induction of budding in a nucleocapsid independent way. In this process the majority of envelope proteins bud to form subviral lipoprotein particles of 22 nm of diameter that do not contain a nucleocapsid. This Homo sapiens (Human) protein is Large envelope protein.